Here is a 110-residue protein sequence, read N- to C-terminus: ATP synthase subunit c (110 aa).

The next 3 membrane-spanning stretches (helical) occupy residues 4-24 (FFVILMVALVVVLTASAVFAA), 37-57 (ATAGALIGLGAAAGGGGAGMG), and 81-101 (FIVGLALIESLVIYVLVFVLI).

Belongs to the ATPase C chain family. In terms of assembly, F-type ATPases have 2 components, F(1) - the catalytic core - and F(0) - the membrane proton channel. F(1) has five subunits: alpha(3), beta(3), gamma(1), delta(1), epsilon(1). F(0) has three main subunits: a(1), b(2) and c(10-14). The alpha and beta chains form an alternating ring which encloses part of the gamma chain. F(1) is attached to F(0) by a central stalk formed by the gamma and epsilon chains, while a peripheral stalk is formed by the delta and b chains.

The protein resides in the cell inner membrane. F(1)F(0) ATP synthase produces ATP from ADP in the presence of a proton or sodium gradient. F-type ATPases consist of two structural domains, F(1) containing the extramembraneous catalytic core and F(0) containing the membrane proton channel, linked together by a central stalk and a peripheral stalk. During catalysis, ATP synthesis in the catalytic domain of F(1) is coupled via a rotary mechanism of the central stalk subunits to proton translocation. Functionally, key component of the F(0) channel; it plays a direct role in translocation across the membrane. A homomeric c-ring of between 10-14 subunits forms the central stalk rotor element with the F(1) delta and epsilon subunits. The polypeptide is ATP synthase subunit c (Thermodesulfovibrio yellowstonii (strain ATCC 51303 / DSM 11347 / YP87)).